The primary structure comprises 149 residues: Arginine repressor (149 aa).

It belongs to the ArgR family.

The protein localises to the cytoplasm. The protein operates within amino-acid biosynthesis; L-arginine biosynthesis [regulation]. Its function is as follows. Regulates arginine biosynthesis genes. The protein is Arginine repressor of Bacillus velezensis (strain DSM 23117 / BGSC 10A6 / LMG 26770 / FZB42) (Bacillus amyloliquefaciens subsp. plantarum).